Reading from the N-terminus, the 419-residue chain is UDP-N-acetylglucosamine 1-carboxyvinyltransferase (419 aa).

22–23 is a binding site for phosphoenolpyruvate; sequence KN. UDP-N-acetyl-alpha-D-glucosamine is bound at residue Arg-93. Cys-117 acts as the Proton donor in catalysis. Cys-117 carries the 2-(S-cysteinyl)pyruvic acid O-phosphothioketal modification. Positions 307 and 329 each coordinate UDP-N-acetyl-alpha-D-glucosamine.

It belongs to the EPSP synthase family. MurA subfamily.

The protein resides in the cytoplasm. The catalysed reaction is phosphoenolpyruvate + UDP-N-acetyl-alpha-D-glucosamine = UDP-N-acetyl-3-O-(1-carboxyvinyl)-alpha-D-glucosamine + phosphate. It functions in the pathway cell wall biogenesis; peptidoglycan biosynthesis. Cell wall formation. Adds enolpyruvyl to UDP-N-acetylglucosamine. In Shewanella baltica (strain OS195), this protein is UDP-N-acetylglucosamine 1-carboxyvinyltransferase.